A 523-amino-acid chain; its full sequence is REST corepressor 2 (523 aa).

Residues 1-43 form a disordered region; it reads MPSVMEKPSAGSGILSRSRAKTAPNGGQPHSEDDSSEEEHSHD. A compositionally biased stretch (basic and acidic residues) spans 30-43; that stretch reads HSEDDSSEEEHSHD. Residues S31, S35, S36, and S63 each carry the phosphoserine modification. The 86-residue stretch at 44-129 folds into the ELM2 domain; the sequence is SMIRVGTNYQ…KSLADLANFT (86 aa). A Glycyl lysine isopeptide (Lys-Gly) (interchain with G-Cter in SUMO2) cross-link involves residue K88. Residues 130-181 enclose the SANT 1 domain; it reads PFPDEWTVEDKVLFEQAFGFHGKCFQRIQQMLPDKVIPSLVKYYYSWKKTRS. The segment at 185-244 is disordered; the sequence is VMDRQARRLGGRKDKEDSDELEEGRGAVSEGEPDTGDPKREPLPSRPLNARPGPGKKEVQ. Position 202 is a phosphoserine (S202). A coiled-coil region spans residues 283-314; sequence TLRGLDSQLISLKRQVQSMKQTNSSLRQALEG. Residues 327-378 enclose the SANT 2 domain; it reads KFNSRWTTDEQLLAVQAIRRYGKDFGAIAEVIGNKTLTQVKTFFVSYRRRFN. The tract at residues 387-523 is disordered; it reads EAEQDGAPAA…APLEPPAPSL (137 aa). Over residues 432 to 459 the composition is skewed to pro residues; that stretch reads SVPPAPPPPPPPTSLSQPPPLLRPPLPT. Residues 460–482 are compositionally biased toward low complexity; that stretch reads APTLLRQPPPLQQGRFLQPRLAP. R479 carries the post-translational modification Asymmetric dimethylarginine. The span at 504 to 523 shows a compositional bias: pro residues; the sequence is GPQPPPTLVGAPLEPPAPSL.

It belongs to the CoREST family. As to expression, predominantly, but not exclusively, expressed in neural tissue. Strongly expressed in neural domains of the developing brain of the developing mouse CNS.

The protein resides in the nucleus. In terms of biological role, may act as a component of a corepressor complex that represses transcription. The polypeptide is REST corepressor 2 (Rcor2) (Mus musculus (Mouse)).